A 294-amino-acid polypeptide reads, in one-letter code: Putative S-adenosyl-L-methionine-dependent methyltransferase RHA1_ro00605 (294 aa).

Residues D120 and 149–150 contribute to the S-adenosyl-L-methionine site; that span reads DL.

It belongs to the UPF0677 family.

In terms of biological role, exhibits S-adenosyl-L-methionine-dependent methyltransferase activity. This Rhodococcus jostii (strain RHA1) protein is Putative S-adenosyl-L-methionine-dependent methyltransferase RHA1_ro00605.